The sequence spans 523 residues: 2-isopropylmalate synthase (523 aa).

The region spanning 5 to 267 is the Pyruvate carboxyltransferase domain; the sequence is VIIFDTTLRD…HTAINHQEIW (263 aa). Mn(2+) is bound by residues D14, H202, H204, and N238. A regulatory domain region spans residues 392–523; it reads RLDYFSVQSG…QHNENNKETV (132 aa).

This sequence belongs to the alpha-IPM synthase/homocitrate synthase family. LeuA type 1 subfamily. As to quaternary structure, homodimer. Requires Mn(2+) as cofactor.

It is found in the cytoplasm. It catalyses the reaction 3-methyl-2-oxobutanoate + acetyl-CoA + H2O = (2S)-2-isopropylmalate + CoA + H(+). It functions in the pathway amino-acid biosynthesis; L-leucine biosynthesis; L-leucine from 3-methyl-2-oxobutanoate: step 1/4. Its function is as follows. Catalyzes the condensation of the acetyl group of acetyl-CoA with 3-methyl-2-oxobutanoate (2-ketoisovalerate) to form 3-carboxy-3-hydroxy-4-methylpentanoate (2-isopropylmalate). The protein is 2-isopropylmalate synthase of Shigella flexneri.